The chain runs to 460 residues: 3-isopropylmalate dehydratase large subunit (460 aa).

Residues Cys-338, Cys-398, and Cys-401 each contribute to the [4Fe-4S] cluster site.

The protein belongs to the aconitase/IPM isomerase family. LeuC type 1 subfamily. As to quaternary structure, heterodimer of LeuC and LeuD. [4Fe-4S] cluster is required as a cofactor.

The enzyme catalyses (2R,3S)-3-isopropylmalate = (2S)-2-isopropylmalate. Its pathway is amino-acid biosynthesis; L-leucine biosynthesis; L-leucine from 3-methyl-2-oxobutanoate: step 2/4. In terms of biological role, catalyzes the isomerization between 2-isopropylmalate and 3-isopropylmalate, via the formation of 2-isopropylmaleate. This Streptococcus sanguinis (strain SK36) protein is 3-isopropylmalate dehydratase large subunit.